Here is a 110-residue protein sequence, read N- to C-terminus: Large ribosomal subunit protein uL22 (110 aa).

Belongs to the universal ribosomal protein uL22 family. As to quaternary structure, part of the 50S ribosomal subunit.

In terms of biological role, this protein binds specifically to 23S rRNA; its binding is stimulated by other ribosomal proteins, e.g. L4, L17, and L20. It is important during the early stages of 50S assembly. It makes multiple contacts with different domains of the 23S rRNA in the assembled 50S subunit and ribosome. Functionally, the globular domain of the protein is located near the polypeptide exit tunnel on the outside of the subunit, while an extended beta-hairpin is found that lines the wall of the exit tunnel in the center of the 70S ribosome. The chain is Large ribosomal subunit protein uL22 from Leptospira borgpetersenii serovar Hardjo-bovis (strain JB197).